Reading from the N-terminus, the 177-residue chain is MGKIIFYEDRNFQGRSYECSNDNPDLQPNFNACNSVRVENGCWMIYERPNYMGHQYFLKRGEYPDYQQCQGLNDSPQSSRLLSQNLGIGTNKLRVYERGDSKGEMMEFLEDCPNVYDRFCSHEIHSCNVLDGYWIFYELPNYKGKQYLLRPGEYKRFTDWGSQTAKVGSFRRVIGIC.

Beta/gamma crystallin 'Greek key' domains follow at residues 2-40 and 41-83; these read GKIIFYEDRNFQGRSYECSNDNPDLQPNFNACNSVRVEN and GCWM…RLLS. The connecting peptide stretch occupies residues 84–90; that stretch reads QNLGIGT. 2 consecutive Beta/gamma crystallin 'Greek key' domains span residues 91–131 and 132–174; these read NKLR…NVLD and GYWI…RRVI.

This sequence belongs to the beta/gamma-crystallin family. In terms of assembly, monomer.

Crystallins are the dominant structural components of the vertebrate eye lens. In Aquarana catesbeiana (American bullfrog), this protein is Gamma-crystallin M1-2.